The chain runs to 452 residues: Glycylpeptide N-tetradecanoyltransferase (452 aa).

Tetradecanoyl-CoA-binding positions include 38 to 41, 171 to 173, and 179 to 183; these read YKFW, LCI, and SKRLA. The active-site Proton acceptor; via carboxylate is Leu452.

It belongs to the NMT family. Monomer.

The protein resides in the cytoplasm. The catalysed reaction is N-terminal glycyl-[protein] + tetradecanoyl-CoA = N-tetradecanoylglycyl-[protein] + CoA + H(+). Functionally, adds a myristoyl group to the N-terminal glycine residue of certain cellular proteins. The chain is Glycylpeptide N-tetradecanoyltransferase (NMT1) from Eremothecium gossypii (strain ATCC 10895 / CBS 109.51 / FGSC 9923 / NRRL Y-1056) (Yeast).